The primary structure comprises 570 residues: Glutamate--tRNA ligase (570 aa).

The 'HIGH' region motif lies at 105-115 (PNPDGAFHLGN).

It belongs to the class-I aminoacyl-tRNA synthetase family. Glutamate--tRNA ligase type 2 subfamily.

Its subcellular location is the cytoplasm. The catalysed reaction is tRNA(Glu) + L-glutamate + ATP = L-glutamyl-tRNA(Glu) + AMP + diphosphate. Functionally, catalyzes the attachment of glutamate to tRNA(Glu) in a two-step reaction: glutamate is first activated by ATP to form Glu-AMP and then transferred to the acceptor end of tRNA(Glu). This Pyrococcus horikoshii (strain ATCC 700860 / DSM 12428 / JCM 9974 / NBRC 100139 / OT-3) protein is Glutamate--tRNA ligase.